Reading from the N-terminus, the 217-residue chain is Ribulose-phosphate 3-epimerase (217 aa).

Position 7 (Ser-7) interacts with substrate. The a divalent metal cation site is built by His-32, Asp-34, and His-65. Catalysis depends on Asp-34, which acts as the Proton acceptor. Substrate-binding positions include His-65, 141 to 144, 175 to 177, and 197 to 198; these read GFGG, DGG, and GS. A divalent metal cation is bound at residue Asp-175. Asp-175 functions as the Proton donor in the catalytic mechanism.

It belongs to the ribulose-phosphate 3-epimerase family. A divalent metal cation serves as cofactor.

The catalysed reaction is D-ribulose 5-phosphate = D-xylulose 5-phosphate. The protein operates within carbohydrate degradation. Catalyzes the reversible epimerization of D-ribulose 5-phosphate to D-xylulose 5-phosphate. The protein is Ribulose-phosphate 3-epimerase of Bacillus subtilis (strain 168).